The sequence spans 232 residues: Phosphatidylserine decarboxylase proenzyme (232 aa).

The Schiff-base intermediate with substrate; via pyruvic acid role is filled by serine 190. Serine 190 bears the Pyruvic acid (Ser); by autocatalysis mark.

The protein belongs to the phosphatidylserine decarboxylase family. PSD-A subfamily. Heterodimer of a large membrane-associated beta subunit and a small pyruvoyl-containing alpha subunit. Pyruvate is required as a cofactor. In terms of processing, is synthesized initially as an inactive proenzyme. Formation of the active enzyme involves a self-maturation process in which the active site pyruvoyl group is generated from an internal serine residue via an autocatalytic post-translational modification. Two non-identical subunits are generated from the proenzyme in this reaction, and the pyruvate is formed at the N-terminus of the alpha chain, which is derived from the carboxyl end of the proenzyme. The post-translation cleavage follows an unusual pathway, termed non-hydrolytic serinolysis, in which the side chain hydroxyl group of the serine supplies its oxygen atom to form the C-terminus of the beta chain, while the remainder of the serine residue undergoes an oxidative deamination to produce ammonia and the pyruvoyl prosthetic group on the alpha chain.

The protein resides in the cell membrane. It carries out the reaction a 1,2-diacyl-sn-glycero-3-phospho-L-serine + H(+) = a 1,2-diacyl-sn-glycero-3-phosphoethanolamine + CO2. It participates in phospholipid metabolism; phosphatidylethanolamine biosynthesis; phosphatidylethanolamine from CDP-diacylglycerol: step 2/2. Functionally, catalyzes the formation of phosphatidylethanolamine (PtdEtn) from phosphatidylserine (PtdSer). Important for establishment of root nodule symbiosis with the host plant. This chain is Phosphatidylserine decarboxylase proenzyme, found in Rhizobium meliloti (strain 1021) (Ensifer meliloti).